Reading from the N-terminus, the 674-residue chain is Acetyl-coenzyme A synthetase (674 aa).

CoA is bound by residues arginine 201–arginine 204 and threonine 320. Residues glycine 396 to proline 398, aspartate 420 to threonine 425, aspartate 518, and arginine 533 contribute to the ATP site. A CoA-binding site is contributed by serine 541. Arginine 544 is a binding site for ATP. Arginine 603 is a CoA binding site.

The protein belongs to the ATP-dependent AMP-binding enzyme family.

It catalyses the reaction acetate + ATP + CoA = acetyl-CoA + AMP + diphosphate. This chain is Acetyl-coenzyme A synthetase (acsA), found in Dictyostelium discoideum (Social amoeba).